The following is a 151-amino-acid chain: Ribosome maturation factor RimP (151 aa).

This sequence belongs to the RimP family.

The protein localises to the cytoplasm. In terms of biological role, required for maturation of 30S ribosomal subunits. In Shewanella sp. (strain MR-4), this protein is Ribosome maturation factor RimP.